The following is a 166-amino-acid chain: Interferon gamma (166 aa).

The N-terminal stretch at Met-1–Gly-23 is a signal peptide. A Pyrrolidone carboxylic acid modification is found at Gln-24. Residues Asn-39 and Asn-106 are each glycosylated (N-linked (GlcNAc...) asparagine).

The protein belongs to the type II (or gamma) interferon family. As to quaternary structure, homodimer. Interacts with IFNGR1 (via extracellular domain); this interaction promotes IFNGR1 dimerization. Released primarily from activated T lymphocytes.

It is found in the secreted. Type II interferon produced by immune cells such as T-cells and NK cells that plays crucial roles in antimicrobial, antiviral, and antitumor responses by activating effector immune cells and enhancing antigen presentation. Primarily signals through the JAK-STAT pathway after interaction with its receptor IFNGR1 to affect gene regulation. Upon IFNG binding, IFNGR1 intracellular domain opens out to allow association of downstream signaling components JAK2, JAK1 and STAT1, leading to STAT1 activation, nuclear translocation and transcription of IFNG-regulated genes. Many of the induced genes are transcription factors such as IRF1 that are able to further drive regulation of a next wave of transcription. Plays a role in class I antigen presentation pathway by inducing a replacement of catalytic proteasome subunits with immunoproteasome subunits. In turn, increases the quantity, quality, and repertoire of peptides for class I MHC loading. Increases the efficiency of peptide generation also by inducing the expression of activator PA28 that associates with the proteasome and alters its proteolytic cleavage preference. Up-regulates as well MHC II complexes on the cell surface by promoting expression of several key molecules such as cathepsins B/CTSB, H/CTSH, and L/CTSL. Participates in the regulation of hematopoietic stem cells during development and under homeostatic conditions by affecting their development, quiescence, and differentiation. This Cervus elaphus (Red deer) protein is Interferon gamma (IFNG).